Reading from the N-terminus, the 1383-residue chain is NPC intracellular cholesterol transporter 1 homolog 1 (1383 aa).

The N-terminal stretch at 1–20 (MKQLLIFCLLFGSIFHHGDA) is a signal peptide. Cystine bridges form between cysteine 22–cysteine 76, cysteine 28–cysteine 39, cysteine 65–cysteine 111, cysteine 77–cysteine 115, cysteine 99–cysteine 246, cysteine 102–cysteine 167, cysteine 182–cysteine 187, and cysteine 235–cysteine 251. A glycan (N-linked (GlcNAc...) asparagine) is linked at asparagine 42. The N-linked (GlcNAc...) asparagine glycan is linked to asparagine 231. The next 2 membrane-spanning stretches (helical) occupy residues 282 to 302 (IFVM…GFVF) and 353 to 373 (PKSH…GMIY). N-linked (GlcNAc...) asparagine glycosylation occurs at asparagine 447. Intrachain disulfides connect cysteine 464-cysteine 474 and cysteine 526-cysteine 541. An N-linked (GlcNAc...) asparagine glycan is attached at asparagine 558. 6 helical membrane-spanning segments follow: residues 627-647 (EIVT…FSLG), 665-685 (ICLG…SWGI), 697-717 (ALVV…FMVV), 746-766 (TMPA…IGGF), 780-800 (GLAV…LFVW), and 856-876 (IITG…SSKI). In terms of domain architecture, SSD spans 627–800 (EIVTVVIALA…CTIFLALFVW (174 aa)). 4 disulfide bridges follow: cysteine 929–cysteine 934, cysteine 976–cysteine 1046, cysteine 977–cysteine 1005, and cysteine 988–cysteine 1002. Residues asparagine 993 and asparagine 1082 are each glycosylated (N-linked (GlcNAc...) asparagine). A run of 5 helical transmembrane segments spans residues 1126-1146 (IMPI…GIIC), 1157-1177 (ACAV…MYIF), 1179-1199 (IPVN…LIEF), 1226-1246 (IGPI…MFLS), and 1260-1280 (LFLI…PILL).

The protein belongs to the patched family.

Its subcellular location is the membrane. The catalysed reaction is cholesterol(in) = cholesterol(out). In terms of biological role, involved in the uptake or utilization of cholesterol. Ncr-1 and ncr-2 act redundantly to prevent dauer larva formation under favorable growth conditions, and are required for the normal functioning of ADF, ASI and ASG neurons. The chain is NPC intracellular cholesterol transporter 1 homolog 1 from Caenorhabditis elegans.